The following is a 342-amino-acid chain: Probable receptor-like protein kinase At4g10390 (342 aa).

Residues 41–336 enclose the Protein kinase domain; it reads SNFSRLIGSG…IKEIPSLSFL (296 aa). ATP-binding positions include 47–55 and Lys-69; that span reads IGSGGYSSI. Asp-165 (proton acceptor) is an active-site residue. Phosphoserine is present on residues Ser-169 and Ser-201. Tyr-220 carries the post-translational modification Phosphotyrosine.

The protein belongs to the protein kinase superfamily. Ser/Thr protein kinase family.

It carries out the reaction L-seryl-[protein] + ATP = O-phospho-L-seryl-[protein] + ADP + H(+). It catalyses the reaction L-threonyl-[protein] + ATP = O-phospho-L-threonyl-[protein] + ADP + H(+). The chain is Probable receptor-like protein kinase At4g10390 from Arabidopsis thaliana (Mouse-ear cress).